A 277-amino-acid chain; its full sequence is Large ribosomal subunit protein uL2 (277 aa).

The tract at residues 219 to 277 is disordered; the sequence is TVRGSVMNPNDHPHGGGEGKAPVGRKAPSTPWGKPALGLKTRNKKAKSDKLIVRRRNEK. Residues 264 to 277 are compositionally biased toward basic and acidic residues; the sequence is AKSDKLIVRRRNEK.

The protein belongs to the universal ribosomal protein uL2 family. In terms of assembly, part of the 50S ribosomal subunit. Forms a bridge to the 30S subunit in the 70S ribosome.

In terms of biological role, one of the primary rRNA binding proteins. Required for association of the 30S and 50S subunits to form the 70S ribosome, for tRNA binding and peptide bond formation. It has been suggested to have peptidyltransferase activity; this is somewhat controversial. Makes several contacts with the 16S rRNA in the 70S ribosome. This chain is Large ribosomal subunit protein uL2, found in Streptococcus pyogenes serotype M1.